The chain runs to 450 residues: MREILHIQGGQCGNQIGAKFWEVVCAEHGIDPTGRYTGDSDLQLERINVYYNEASCGRFVPRAVLMDLEPGTMDSLRSGPYGQTFRPDNFVFGQSGAGNNWAKGHYTEGAELIDSVLDVVRKEAENCDCLQGFQVCHSLGGGTGSGMGTLLISKIREEYPDRMMLTFSVFPSPKVSDTVVEPYNATLSVHQLVENADECMVLDNEALYDICFRTLKLTTPSFGDLNHLISATMSGVTCCLRFPGQLNSDLRKLAVNLIPFPRLHFFMVGFAPLTSRGSQQYRSLTVPELTQQMWDSKNMMCAADPRHGRYLTASAMFRGKMSTKEVDEQMLNVQNKNSSYFVEWIPNNVKSTVCDIPPTGLKMASTFIGNSTSIQEMFRRVSEQFTAMFRRKAFLHWYTGEGMDEMEFTEAESNMNDLVSEYQQYQDATADEEGDYEDEEEGEYQQEEEY.

Positions 11, 69, 138, 142, 143, 144, 204, and 226 each coordinate GTP. Glu-69 is a binding site for Mg(2+). A disordered region spans residues 420–450 (SEYQQYQDATADEEGDYEDEEEGEYQQEEEY). Over residues 429 to 450 (TADEEGDYEDEEEGEYQQEEEY) the composition is skewed to acidic residues.

It belongs to the tubulin family. As to quaternary structure, dimer of alpha and beta chains. A typical microtubule is a hollow water-filled tube with an outer diameter of 25 nm and an inner diameter of 15 nM. Alpha-beta heterodimers associate head-to-tail to form protofilaments running lengthwise along the microtubule wall with the beta-tubulin subunit facing the microtubule plus end conferring a structural polarity. Microtubules usually have 13 protofilaments but different protofilament numbers can be found in some organisms and specialized cells. The cofactor is Mg(2+).

The protein localises to the cytoplasm. Its subcellular location is the cytoskeleton. Its function is as follows. Tubulin is the major constituent of microtubules, a cylinder consisting of laterally associated linear protofilaments composed of alpha- and beta-tubulin heterodimers. Microtubules grow by the addition of GTP-tubulin dimers to the microtubule end, where a stabilizing cap forms. Below the cap, tubulin dimers are in GDP-bound state, owing to GTPase activity of alpha-tubulin. This Arabidopsis thaliana (Mouse-ear cress) protein is Tubulin beta-3 chain (TUBB3).